Consider the following 519-residue polypeptide: Protein nucleotidyltransferase YdiU (519 aa).

Residues glycine 100, glycine 102, arginine 103, lysine 123, aspartate 135, glycine 136, arginine 193, and arginine 200 each contribute to the ATP site. The active-site Proton acceptor is aspartate 270. Positions 271 and 280 each coordinate Mg(2+). Aspartate 280 lines the ATP pocket.

Belongs to the SELO family. It depends on Mg(2+) as a cofactor. Mn(2+) is required as a cofactor.

It carries out the reaction L-seryl-[protein] + ATP = 3-O-(5'-adenylyl)-L-seryl-[protein] + diphosphate. It catalyses the reaction L-threonyl-[protein] + ATP = 3-O-(5'-adenylyl)-L-threonyl-[protein] + diphosphate. The catalysed reaction is L-tyrosyl-[protein] + ATP = O-(5'-adenylyl)-L-tyrosyl-[protein] + diphosphate. The enzyme catalyses L-histidyl-[protein] + UTP = N(tele)-(5'-uridylyl)-L-histidyl-[protein] + diphosphate. It carries out the reaction L-seryl-[protein] + UTP = O-(5'-uridylyl)-L-seryl-[protein] + diphosphate. It catalyses the reaction L-tyrosyl-[protein] + UTP = O-(5'-uridylyl)-L-tyrosyl-[protein] + diphosphate. Its function is as follows. Nucleotidyltransferase involved in the post-translational modification of proteins. It can catalyze the addition of adenosine monophosphate (AMP) or uridine monophosphate (UMP) to a protein, resulting in modifications known as AMPylation and UMPylation. In Xylella fastidiosa (strain 9a5c), this protein is Protein nucleotidyltransferase YdiU.